A 608-amino-acid chain; its full sequence is MNREERLKRRDRIRNFSIIAHIDHGKSTLADRILEKTGALSEREMKEQALDSMELERERGITIKLNAVQLHYKAKDGEDYILHLIDTPGHVDFTYEVSRSLAACEGAILVVDAAQGIEAQTLANVYLAIDNNLEILPVINKIDLPSADPERVRQEIEDVIGLDASEAVLASAKVGIGIDEILEQIVQKIPAPSGDPDAPLKALIFDSLYDPYRGVVAYIRVVEGTVKAGQKIKMMATGKEFEVVEVGVFTPKAKVVDELTVGDVGYLTASIKNVSDTRVGDTITHADNPANEPLPGYRRLNPMVFCGLYPIDTARYNDLREALEKLQLNDAALQFEPETSQALGFGFRCGFLGLLHMEIIQERLEREFNIDIIATAPSVVYKVYLTDGTELAVDNPSNMPDPQKIERVEEPYVRATIMVPNDYVGPVMELCQKKRGIFGDMQYLDERRVTLTYELPLAEIVYDFFDILKSSTKGYASFDYELIGYKPSKLVKMDILLNGEKVDALSFIVHRDSAYDRGKVIVEKLKDLIPRQQFEVPVQAAIGNKIIARSTIKALRKNVLAKCYGGDISRKRKLLEKQKEGKKRMKQVGSVEVPQEAFMAVLKMDDQK.

The tr-type G domain maps to 11-193; sequence DRIRNFSIIA…QIVQKIPAPS (183 aa). GTP is bound by residues 23-28 and 140-143; these read DHGKST and NKID.

The protein belongs to the TRAFAC class translation factor GTPase superfamily. Classic translation factor GTPase family. LepA subfamily.

The protein resides in the cell membrane. The enzyme catalyses GTP + H2O = GDP + phosphate + H(+). Its function is as follows. Required for accurate and efficient protein synthesis under certain stress conditions. May act as a fidelity factor of the translation reaction, by catalyzing a one-codon backward translocation of tRNAs on improperly translocated ribosomes. Back-translocation proceeds from a post-translocation (POST) complex to a pre-translocation (PRE) complex, thus giving elongation factor G a second chance to translocate the tRNAs correctly. Binds to ribosomes in a GTP-dependent manner. This is Elongation factor 4 from Anoxybacillus flavithermus (strain DSM 21510 / WK1).